We begin with the raw amino-acid sequence, 191 residues long: Fe/S biogenesis protein NfuA (191 aa).

Residues Cys-149 and Cys-152 each coordinate [4Fe-4S] cluster.

This sequence belongs to the NfuA family. As to quaternary structure, homodimer. Requires [4Fe-4S] cluster as cofactor.

In terms of biological role, involved in iron-sulfur cluster biogenesis. Binds a 4Fe-4S cluster, can transfer this cluster to apoproteins, and thereby intervenes in the maturation of Fe/S proteins. Could also act as a scaffold/chaperone for damaged Fe/S proteins. This is Fe/S biogenesis protein NfuA from Salmonella choleraesuis (strain SC-B67).